A 240-amino-acid chain; its full sequence is Protein OPG176 (240 aa).

It belongs to the orthopoxvirus OPG176 family. In terms of assembly, tetramer. Interacts with host MYD88, TRF4, TICAM2 and MAL.

In terms of biological role, BCL2-like protein which disrupts the host immune response by inhibiting the TLR4 signaling pathway leading to NF-kappa-B activation. Acts close to the plasma membrane and targets several host TIR-domain containing adapter proteins including MYD88, TIRAP, TRIF and TICAM2. In turn, blocks the host NF-kappa-B and TRIF-mediated IRF3 activation. In Bos taurus (Bovine), this protein is Protein OPG176 (OPG176).